Consider the following 222-residue polypeptide: N-(5'-phosphoribosyl)anthranilate isomerase (222 aa).

It belongs to the TrpF family.

It catalyses the reaction N-(5-phospho-beta-D-ribosyl)anthranilate = 1-(2-carboxyphenylamino)-1-deoxy-D-ribulose 5-phosphate. Its pathway is amino-acid biosynthesis; L-tryptophan biosynthesis; L-tryptophan from chorismate: step 3/5. The sequence is that of N-(5'-phosphoribosyl)anthranilate isomerase from Rhizobium johnstonii (strain DSM 114642 / LMG 32736 / 3841) (Rhizobium leguminosarum bv. viciae).